Here is a 271-residue protein sequence, read N- to C-terminus: Formamidopyrimidine-DNA glycosylase (271 aa).

The Schiff-base intermediate with DNA role is filled by Pro-2. Glu-3 functions as the Proton donor in the catalytic mechanism. The Proton donor; for beta-elimination activity role is filled by Lys-56. 3 residues coordinate DNA: His-89, Arg-107, and Arg-151. The FPG-type zinc finger occupies 236–270; the sequence is MVYARQGQPCRVCATPIKSLRQGQRSTFYCPHCQK. Residue Arg-260 is the Proton donor; for delta-elimination activity of the active site.

This sequence belongs to the FPG family. As to quaternary structure, monomer. Zn(2+) serves as cofactor.

It carries out the reaction Hydrolysis of DNA containing ring-opened 7-methylguanine residues, releasing 2,6-diamino-4-hydroxy-5-(N-methyl)formamidopyrimidine.. The enzyme catalyses 2'-deoxyribonucleotide-(2'-deoxyribose 5'-phosphate)-2'-deoxyribonucleotide-DNA = a 3'-end 2'-deoxyribonucleotide-(2,3-dehydro-2,3-deoxyribose 5'-phosphate)-DNA + a 5'-end 5'-phospho-2'-deoxyribonucleoside-DNA + H(+). In terms of biological role, involved in base excision repair of DNA damaged by oxidation or by mutagenic agents. Acts as a DNA glycosylase that recognizes and removes damaged bases. Has a preference for oxidized purines, such as 7,8-dihydro-8-oxoguanine (8-oxoG). Has AP (apurinic/apyrimidinic) lyase activity and introduces nicks in the DNA strand. Cleaves the DNA backbone by beta-delta elimination to generate a single-strand break at the site of the removed base with both 3'- and 5'-phosphates. This Albidiferax ferrireducens (strain ATCC BAA-621 / DSM 15236 / T118) (Rhodoferax ferrireducens) protein is Formamidopyrimidine-DNA glycosylase.